The sequence spans 156 residues: Small ribosomal subunit protein uS7 (156 aa).

This sequence belongs to the universal ribosomal protein uS7 family. In terms of assembly, part of the 30S ribosomal subunit. Contacts proteins S9 and S11.

One of the primary rRNA binding proteins, it binds directly to 16S rRNA where it nucleates assembly of the head domain of the 30S subunit. Is located at the subunit interface close to the decoding center, probably blocks exit of the E-site tRNA. This chain is Small ribosomal subunit protein uS7, found in Janthinobacterium sp. (strain Marseille) (Minibacterium massiliensis).